We begin with the raw amino-acid sequence, 269 residues long: AA9 family lytic polysaccharide monooxygenase I (269 aa).

Positions 1–17 (MFSKKITALALVSAVKA) are cleaved as a signal peptide. His18 and His103 together coordinate Cu(2+). An intrachain disulfide couples Cys73 to Cys196. An N-linked (GlcNAc...) asparagine glycan is attached at Asn156. The O2 site is built by His182 and Gln191. Residue Tyr193 coordinates Cu(2+).

This sequence belongs to the polysaccharide monooxygenase AA9 family. Cu(2+) is required as a cofactor.

Its subcellular location is the secreted. It carries out the reaction [(1-&gt;4)-beta-D-glucosyl]n+m + reduced acceptor + O2 = 4-dehydro-beta-D-glucosyl-[(1-&gt;4)-beta-D-glucosyl]n-1 + [(1-&gt;4)-beta-D-glucosyl]m + acceptor + H2O.. Functionally, lytic polysaccharide monooxygenase (LPMO) that depolymerizes crystalline and amorphous polysaccharides via the oxidation of scissile alpha- or beta-(1-4)-glycosidic bonds, yielding C1 and C4 oxidation products. Catalysis by LPMOs requires the reduction of the active-site copper from Cu(II) to Cu(I) by a reducing agent and H(2)O(2) or O(2) as a cosubstrate. In Botryotinia fuckeliana (strain B05.10) (Noble rot fungus), this protein is AA9 family lytic polysaccharide monooxygenase I.